The chain runs to 238 residues: Orotidine 5'-phosphate decarboxylase (238 aa).

Residues Asp-10, Lys-32, 59–68 (DLKLHDIPNT), Thr-122, Arg-184, Gln-193, Gly-213, and Arg-214 each bind substrate. The Proton donor role is filled by Lys-61.

It belongs to the OMP decarboxylase family. Type 1 subfamily. As to quaternary structure, homodimer.

The enzyme catalyses orotidine 5'-phosphate + H(+) = UMP + CO2. Its pathway is pyrimidine metabolism; UMP biosynthesis via de novo pathway; UMP from orotate: step 2/2. Its function is as follows. Catalyzes the decarboxylation of orotidine 5'-monophosphate (OMP) to uridine 5'-monophosphate (UMP). The polypeptide is Orotidine 5'-phosphate decarboxylase (Bacillus anthracis (strain A0248)).